Here is a 728-residue protein sequence, read N- to C-terminus: Procollagen-lysine,2-oxoglutarate 5-dioxygenase 1 (728 aa).

Positions 1-18 are cleaved as a signal peptide; it reads MRSLLLLASLAWLLLAQA. Asn177, Asn198, and Asn539 each carry an N-linked (GlcNAc...) asparagine glycan. A Fe2OG dioxygenase domain is found at 637–728; sequence QFDLAFVVRY…RYIAVSFVDP (92 aa). Fe cation-binding residues include His657 and Asp659. The N-linked (GlcNAc...) asparagine glycan is linked to Asn687. A Fe cation-binding site is contributed by His709. Residue Arg719 is part of the active site.

In terms of assembly, homodimer. Identified in a complex with P3H3 and P3H4. Requires Fe(2+) as cofactor. The cofactor is L-ascorbate.

It localises to the rough endoplasmic reticulum membrane. It carries out the reaction L-lysyl-[collagen] + 2-oxoglutarate + O2 = (5R)-5-hydroxy-L-lysyl-[collagen] + succinate + CO2. In terms of biological role, part of a complex composed of PLOD1, P3H3 and P3H4 that catalyzes hydroxylation of lysine residues in collagen alpha chains and is required for normal assembly and cross-linkling of collagen fibrils. Forms hydroxylysine residues in -Xaa-Lys-Gly- sequences in collagens. These hydroxylysines serve as sites of attachment for carbohydrate units and are essential for the stability of the intermolecular collagen cross-links. The sequence is that of Procollagen-lysine,2-oxoglutarate 5-dioxygenase 1 (Plod1) from Rattus norvegicus (Rat).